Here is a 77-residue protein sequence, read N- to C-terminus: U8-lycotoxin-Ls1r (77 aa).

The signal sequence occupies residues 1-20 (MKLIIFTGLVLFAIVSLIEA). A propeptide spanning residues 21–26 (QAENEK) is cleaved from the precursor.

It belongs to the neurotoxin 19 (CSTX) family. 08 (U8-Lctx) subfamily. In terms of processing, contains 4 disulfide bonds. As to expression, expressed by the venom gland.

Its subcellular location is the secreted. This is U8-lycotoxin-Ls1r from Lycosa singoriensis (Wolf spider).